Consider the following 266-residue polypeptide: Probable BRI1 kinase inhibitor 1 (266 aa).

Disordered stretches follow at residues 1-144 (MTMN…AKTR) and 167-242 (FSRH…SEES). Positions 9–30 (RSQPPPPHPPLFKPTTPPPPPL) are enriched in pro residues. Positions 31 to 40 (LSTSTSTSPP) are enriched in low complexity. Positions 77–93 (LSHNNYSSKANQHRQTG) are enriched in polar residues. Residues 100 to 109 (SKEKDREYKA) are compositionally biased toward basic and acidic residues. Composition is skewed to low complexity over residues 210–221 (LSSAPASLRASP) and 229–241 (VGGSVKVSTSSEE).

Functionally, negative regulator of brassinosteroid signaling. The protein is Probable BRI1 kinase inhibitor 1 (BKI1) of Oryza sativa subsp. indica (Rice).